The chain runs to 403 residues: GPI-N-acetylgalactosamine transferase PGAP4 (403 aa).

Topologically, residues 1 to 22 are cytoplasmic; that stretch reads MSTSTSPAAMLLRRLRRLSWGS. The chain crosses the membrane as a helical span at residues 23–43; sequence TAVQLFILTVVTFGLLAPLAC. At 44–259 the chain is on the lumenal side; the sequence is HRLLHSYFYL…RLQHYTNPEP (216 aa). Position 109 (Val-109) interacts with UDP-N-acetyl-alpha-D-galactosamine. Disulfide bonds link Cys-132–Cys-136 and Cys-144–Cys-194. Positions 211–213 match the DXD motif motif; that stretch reads EDD. The chain crosses the membrane as a helical span at residues 260-280; it reads MRILEWVGVGMLLGPLLTWIY. At 281–287 the chain is on the cytoplasmic side; sequence MRFASRP. A helical transmembrane segment spans residues 288 to 308; that stretch reads GFSWPVMLFFSLYSMGLVELV. Residues 309-403 lie on the Lumenal side of the membrane; the sequence is GRHYFLELRR…LRYNFHPSLL (95 aa). Cys-332 and Cys-333 form a disulfide bridge. UDP-N-acetyl-alpha-D-galactosamine-binding residues include Thr-334, Pro-335, and Lys-362.

Belongs to the PGAP4 family. Glycosylated.

The protein localises to the golgi apparatus membrane. Golgi-resident glycosylphosphatidylinositol (GPI)-N-acetylgalactosamine transferase that catalyzes the N-acetyl-beta-D-galactosamine transfer from an UDP-N-acetyl-alpha-D-galactosamine to the 4-OH-position of first mannose of the glycosylphosphatidylinositol (GPI) of a GPI-anchored protein (GPI-AP). This modification occurs after the fatty acid remodeling step of the GPI-anchor maturation. This Pongo abelii (Sumatran orangutan) protein is GPI-N-acetylgalactosamine transferase PGAP4.